The sequence spans 1529 residues: Mediator of RNA polymerase II transcription subunit 1.1 (1529 aa).

Disordered regions lie at residues 685-740, 807-919, and 933-1529; these read PDAA…VVGE, QYRM…MRDN, and PDIE…IDDE. Basic residues predominate over residues 693-702; it reads GKQRKPRAKK. Low complexity-rich tracts occupy residues 722 to 739 and 807 to 828; these read GAAA…GVVG and QYRM…PQQQ. A compositionally biased stretch (pro residues) spans 894–905; the sequence is TPSPLSAPPKPF. Basic and acidic residues predominate over residues 908–919; that stretch reads EQHHFGTKMRDN. Low complexity-rich tracts occupy residues 958–990 and 1008–1023; these read SSSS…TAQT and QEQA…IQQQ. A coiled-coil region spans residues 1008 to 1032; it reads QEQALQKQEQQRIQQQDSVDSTNSE. Polar residues-rich tracts occupy residues 1051-1061, 1068-1089, and 1096-1105; these read NQVNRVMNMSN, GSST…STGS, and TPGTSSNIAQ. 4 stretches are compositionally biased toward basic and acidic residues: residues 1113-1130, 1137-1185, 1192-1240, and 1262-1278; these read LKKE…EKLI, LKVD…ERDK, RDRT…KELS, and PKKD…KDES. Residues 1169–1202 adopt a coiled-coil conformation; sequence EKEDKSQREKDKKERDKERKRRDRDRTEAKKEKD. Over residues 1279-1288 the composition is skewed to low complexity; the sequence is IPGPSTSSES. Over residues 1289-1304 the composition is skewed to basic and acidic residues; sequence STRKEVAPAPISRKES. Residues 1349–1365 show a composition bias toward low complexity; that stretch reads SYSGSSNAGPISSSSRG. 2 stretches are compositionally biased toward pro residues: residues 1375-1386 and 1477-1500; these read PVLPPPALPMRG and QPPP…APPS.

Belongs to the Mediator complex subunit 1 family. In terms of assembly, component of the Mediator complex.

It localises to the nucleus. Its function is as follows. Component of the Mediator complex, a coactivator involved in the regulated transcription of nearly all RNA polymerase II-dependent genes. Mediator functions as a bridge to convey information from gene-specific regulatory proteins to the basal RNA polymerase II transcription machinery. Mediator is recruited to promoters by direct interactions with regulatory proteins and serves as a scaffold for the assembly of a functional preinitiation complex with RNA polymerase II and the general transcription factors. The polypeptide is Mediator of RNA polymerase II transcription subunit 1.1 (sop-3) (Caenorhabditis briggsae).